A 142-amino-acid chain; its full sequence is Mitochondrial import receptor subunit TOM22 homolog (142 aa).

Residues methionine 1–glutamate 18 are compositionally biased toward low complexity. Residues methionine 1–aspartate 41 form a disordered region. Alanine 2 bears the N-acetylalanine mark. The Cytoplasmic portion of the chain corresponds to alanine 2–alanine 83. At serine 15 the chain carries Phosphoserine. The segment covering lysine 27 to aspartate 41 has biased composition (acidic residues). Residues aspartate 41–glycine 50 are import sequence; necessary for mitochondrion outer membrane localization and integration in the TOM complex. A Phosphothreonine modification is found at threonine 43. Residue serine 45 is modified to Phosphoserine. The TMD; necessary for mitochondrion outer membrane localization and integration in the TOM complex stretch occupies residues alanine 83 to threonine 103. The helical transmembrane segment at alanine 84–threonine 103 threads the bilayer. Topologically, residues glutamate 104–methionine 142 are mitochondrial intermembrane. The interval proline 123–methionine 142 is C-tail signal; necessary for mitochondrion outer membrane localization and integration in the TOM complex.

Belongs to the Tom22 family. In terms of assembly, forms part of the preprotein translocase complex of the outer mitochondrial membrane (TOM complex) which consists of at least 7 different proteins (TOMM5, TOMM6, TOMM7, TOMM20, TOMM22, TOMM40 and TOMM70). Interacts with PPP2R2B and TOMM40.

Its subcellular location is the mitochondrion outer membrane. In terms of biological role, central receptor component of the translocase of the outer membrane of mitochondria (TOM complex) responsible for the recognition and translocation of cytosolically synthesized mitochondrial preproteins. Together with the peripheral receptor TOM20 functions as the transit peptide receptor and facilitates the movement of preproteins into the translocation pore. Required for the translocation across the mitochondrial outer membrane of cytochrome P450 monooxygenases. The protein is Mitochondrial import receptor subunit TOM22 homolog (Tomm22) of Mus musculus (Mouse).